Reading from the N-terminus, the 139-residue chain is Protein Turandot B (139 aa).

A signal peptide spans 1–21 (MNFKTALICFALLLIGTLCSA).

The protein belongs to the Turandot family.

It localises to the secreted. A humoral factor that may play a role in stress tolerance. The chain is Protein Turandot B from Drosophila sechellia (Fruit fly).